The sequence spans 120 residues: ATP-dependent Clp protease adapter protein ClpS (120 aa).

Positions 9–32 (LTFNQDHPAEHEDDSSGIAVQESK) are disordered.

This sequence belongs to the ClpS family. Binds to the N-terminal domain of the chaperone ClpA.

Involved in the modulation of the specificity of the ClpAP-mediated ATP-dependent protein degradation. The chain is ATP-dependent Clp protease adapter protein ClpS from Ectopseudomonas mendocina (strain ymp) (Pseudomonas mendocina).